The primary structure comprises 360 residues: Phospho-N-acetylmuramoyl-pentapeptide-transferase (360 aa).

The next 10 helical transmembrane spans lie at 18 to 38, 73 to 93, 94 to 114, 134 to 154, 168 to 188, 199 to 219, 239 to 259, 263 to 283, 288 to 308, and 338 to 358; these read VFSYLTFRAIISTLTALFISL, TMGGLLILASIVISVLLWADL, SNIYVWVVLFVIVSFGIVGFV, YFWQTVIGLSTALFLYFIAQG, LLPQLGIFYVVMSYFVIVGTS, GLAIVPTIMVAGAFALFAYVT, LVIVCTAIVGAGLGFLWFNTY, VFMGDVGSLALGAALGVIAIL, LVLFIMGGVFVMETVSVILQV, and VIVRFWIISLILVLIGLATLK.

Belongs to the glycosyltransferase 4 family. MraY subfamily. Mg(2+) serves as cofactor.

It localises to the cell inner membrane. The enzyme catalyses UDP-N-acetyl-alpha-D-muramoyl-L-alanyl-gamma-D-glutamyl-meso-2,6-diaminopimeloyl-D-alanyl-D-alanine + di-trans,octa-cis-undecaprenyl phosphate = di-trans,octa-cis-undecaprenyl diphospho-N-acetyl-alpha-D-muramoyl-L-alanyl-D-glutamyl-meso-2,6-diaminopimeloyl-D-alanyl-D-alanine + UMP. Its pathway is cell wall biogenesis; peptidoglycan biosynthesis. In terms of biological role, catalyzes the initial step of the lipid cycle reactions in the biosynthesis of the cell wall peptidoglycan: transfers peptidoglycan precursor phospho-MurNAc-pentapeptide from UDP-MurNAc-pentapeptide onto the lipid carrier undecaprenyl phosphate, yielding undecaprenyl-pyrophosphoryl-MurNAc-pentapeptide, known as lipid I. The chain is Phospho-N-acetylmuramoyl-pentapeptide-transferase from Colwellia psychrerythraea (strain 34H / ATCC BAA-681) (Vibrio psychroerythus).